The following is a 228-amino-acid chain: Probable septum site-determining protein MinC (228 aa).

This sequence belongs to the MinC family. Interacts with MinD and FtsZ.

In terms of biological role, cell division inhibitor that blocks the formation of polar Z ring septums. Rapidly oscillates between the poles of the cell to destabilize FtsZ filaments that have formed before they mature into polar Z rings. Prevents FtsZ polymerization. This is Probable septum site-determining protein MinC from Bacillus anthracis (strain A0248).